Here is a 170-residue protein sequence, read N- to C-terminus: Large ribosomal subunit protein uL18m (170 aa).

It belongs to the universal ribosomal protein uL18 family. As to quaternary structure, component of the mitochondrial ribosome large subunit (39S) which comprises a 16S rRNA and about 50 distinct proteins.

The protein localises to the mitochondrion. The chain is Large ribosomal subunit protein uL18m (mrpl-18) from Caenorhabditis elegans.